The sequence spans 183 residues: Ferritin light chain 1 (183 aa).

The Ferritin-like diiron domain maps to 7–156 (QNYSTEVEAA…NHLTNLRRVA (150 aa)). Residues glutamate 54, glutamate 57, glutamate 58, glutamate 61, and glutamate 64 each coordinate Fe cation.

It belongs to the ferritin family. In terms of assembly, oligomer of 24 subunits. There are two types of subunits: L (light) chain and H (heavy) chain. The major chain can be light or heavy, depending on the species and tissue type. The functional molecule forms a roughly spherical shell with a diameter of 12 nm and contains a central cavity into which the insoluble mineral iron core is deposited. Interacts with NCOA4.

Its subcellular location is the cytoplasm. The protein localises to the cytoplasmic vesicle. It is found in the autophagosome. The protein resides in the autolysosome. Its function is as follows. Stores iron in a soluble, non-toxic, readily available form. Important for iron homeostasis. Iron is taken up in the ferrous form and deposited as ferric hydroxides after oxidation. Also plays a role in delivery of iron to cells. Mediates iron uptake in capsule cells of the developing kidney. Degraded to release iron upon autophagy activation by nutrient starvation. This is Ferritin light chain 1 (Ftl1) from Mus musculus (Mouse).